The sequence spans 385 residues: 1-deoxy-D-xylulose 5-phosphate reductoisomerase (385 aa).

Positions 10, 11, 12, 13, 37, and 124 each coordinate NADPH. Lys125 serves as a coordination point for 1-deoxy-D-xylulose 5-phosphate. An NADPH-binding site is contributed by Glu126. Mn(2+) is bound at residue Asp150. 4 residues coordinate 1-deoxy-D-xylulose 5-phosphate: Ser151, Glu152, Ser176, and His199. Residue Glu152 coordinates Mn(2+). Gly205 is a binding site for NADPH. 1-deoxy-D-xylulose 5-phosphate-binding residues include Ser212, Asn217, Lys218, and Glu221. Glu221 provides a ligand contact to Mn(2+).

It belongs to the DXR family. It depends on Mg(2+) as a cofactor. Mn(2+) serves as cofactor.

The enzyme catalyses 2-C-methyl-D-erythritol 4-phosphate + NADP(+) = 1-deoxy-D-xylulose 5-phosphate + NADPH + H(+). Its pathway is isoprenoid biosynthesis; isopentenyl diphosphate biosynthesis via DXP pathway; isopentenyl diphosphate from 1-deoxy-D-xylulose 5-phosphate: step 1/6. Catalyzes the NADPH-dependent rearrangement and reduction of 1-deoxy-D-xylulose-5-phosphate (DXP) to 2-C-methyl-D-erythritol 4-phosphate (MEP). The sequence is that of 1-deoxy-D-xylulose 5-phosphate reductoisomerase from Clostridium botulinum (strain Langeland / NCTC 10281 / Type F).